An 886-amino-acid polypeptide reads, in one-letter code: Cytosolic carboxypeptidase-like protein 5 (886 aa).

The 414-residue stretch at 157-570 (YPFSYSDCQE…AMAIAALDMA (414 aa)) folds into the Peptidase M14 domain. 2 residues coordinate Zn(2+): histidine 252 and glutamate 255. Low complexity predominate over residues 344 to 354 (SQSSSEHQPSS). The interval 344 to 364 (SQSSSEHQPSSCLPPDAPVSD) is disordered. Histidine 434 serves as a coordination point for Zn(2+). The active-site Proton donor/acceptor is the glutamate 516. Disordered stretches follow at residues 605 to 734 (STLN…SSHK) and 784 to 848 (LQAR…FSPI). Residues 631–640 (CSENTLSRAR) are compositionally biased toward polar residues. Positions 641–666 (SFSTGTSAGGSSSSQQNSPQMKNSPS) are enriched in low complexity. Positions 696 to 705 (REPRSQDRRR) are enriched in basic and acidic residues. Over residues 714–732 (PAGSLAPSPAPTSSGPASS) the composition is skewed to low complexity. Serine 841 is subject to Phosphoserine.

Belongs to the peptidase M14 family. Zn(2+) serves as cofactor. Expressed in brain.

The protein localises to the cytoplasm. Its subcellular location is the cytosol. It localises to the nucleus. The protein resides in the cytoskeleton. It is found in the spindle. The protein localises to the midbody. The catalysed reaction is gamma-L-glutamyl-L-glutamyl-[protein] + H2O = L-glutamyl-[protein] + L-glutamate. It catalyses the reaction (L-glutamyl)(n+1)-gamma-L-glutamyl-L-glutamyl-[protein] + H2O = (L-glutamyl)(n)-gamma-L-glutamyl-L-glutamyl-[protein] + L-glutamate. The enzyme catalyses C-terminal L-alpha-aminoacyl-L-glutamyl-[tubulin] + H2O = C-terminal L-alpha-aminoacyl-[tubulin] + L-glutamate. It carries out the reaction C-terminal L-alpha-aminoacyl-L-glutamyl-L-glutamyl-[tubulin] + H2O = C-terminal L-alpha-aminoacyl-L-glutamyl-[tubulin] + L-glutamate. Metallocarboxypeptidase that mediates deglutamylation of tubulin and non-tubulin target proteins. Catalyzes the removal of polyglutamate side chains present on the gamma-carboxyl group of glutamate residues within the C-terminal tail of alpha- and beta-tubulin. Cleaves alpha- and gamma-linked polyglutamate tubulin side-chain, as well as the branching point glutamate. Also catalyzes the removal of alpha-linked glutamate residues from the carboxy-terminus of alpha-tubulin. Mediates deglutamylation of nucleotidyltransferase CGAS, leading to CGAS antiviral defense response activation. The chain is Cytosolic carboxypeptidase-like protein 5 from Homo sapiens (Human).